A 290-amino-acid chain; its full sequence is CMRF35-like molecule 1 (290 aa).

A signal peptide spans 1-19; that stretch reads MPLLTLYLLLFWLSGYSIV. Positions 20 to 126 constitute an Ig-like V-type domain; it reads TQITGPTTVN…LGVTVQVTID (107 aa). Over 20-156 the chain is Extracellular; the sequence is TQITGPTTVN…DNRHKLLKLS (137 aa). 2 disulfides stabilise this stretch: cysteine 40-cysteine 108 and cysteine 54-cysteine 62. Asparagine 88 carries an N-linked (GlcNAc...) asparagine glycan. Residues 157 to 177 traverse the membrane as a helical segment; sequence VLLPLIFTILLLLLVAASLLA. Residues 178-290 lie on the Cytoplasmic side of the membrane; the sequence is WRMMKYQQKA…PTEYSTISRP (113 aa). The interval 267–290 is disordered; it reads GHLSSHLPGRGPEEPTEYSTISRP.

It belongs to the CD300 family. As to quaternary structure, interacts with PTPN6/SHP-1 in a tyrosine phosphorylation dependent manner. Interacts with IL4R. Phosphorylated on tyrosine. As to expression, highly expressed in spleen, peripheral blood leukocyte and monocyte, and lung. Weakly expressed in thymus, heart, brain, placenta, liver, skeletal muscle, kidney, pancreas, prostate, testis, ovary, small intestine or colon. Expressed selectively in monocytes and monocyte-related cells.

Its subcellular location is the cell membrane. Its function is as follows. Acts as an inhibitory receptor for myeloid cells and mast cells. Positively regulates the phagocytosis of apoptotic cells (efferocytosis) via phosphatidylserine (PS) recognition; recognizes and binds PS as a ligand which is expressed on the surface of apoptotic cells. Plays an important role in the maintenance of immune homeostasis, by promoting macrophage-mediated efferocytosis and by inhibiting dendritic cell-mediated efferocytosis. Negatively regulates Fc epsilon receptor-dependent mast cell activation and allergic responses via binding to ceramide and sphingomyelin which act as ligands. May act as a coreceptor for interleukin 4 (IL-4). Associates with and regulates IL-4 receptor alpha-mediated responses by augmenting IL-4- and IL-13-induced signaling. Negatively regulates the Toll-like receptor (TLR) signaling mediated by MYD88 and TRIF through activation of PTPN6/SHP-1 and PTPN11/SHP-2. Inhibits osteoclast formation. Induces macrophage cell death upon engagement. This is CMRF35-like molecule 1 (CD300LF) from Homo sapiens (Human).